The chain runs to 239 residues: Phosphoribosylaminoimidazole-succinocarboxamide synthase (239 aa).

The protein belongs to the SAICAR synthetase family.

It carries out the reaction 5-amino-1-(5-phospho-D-ribosyl)imidazole-4-carboxylate + L-aspartate + ATP = (2S)-2-[5-amino-1-(5-phospho-beta-D-ribosyl)imidazole-4-carboxamido]succinate + ADP + phosphate + 2 H(+). The protein operates within purine metabolism; IMP biosynthesis via de novo pathway; 5-amino-1-(5-phospho-D-ribosyl)imidazole-4-carboxamide from 5-amino-1-(5-phospho-D-ribosyl)imidazole-4-carboxylate: step 1/2. This is Phosphoribosylaminoimidazole-succinocarboxamide synthase from Dichelobacter nodosus (strain VCS1703A).